A 155-amino-acid polypeptide reads, in one-letter code: MSSRMARRRARELALQGVYQWLLSGNSPQVVEAHVEAEAADFDKVDRELFVMLLRGTLDNVGALQDEFSPFIHRPIEELSPIERAILLLGTHELKHNIETPYRVVINEAIELAKAYGGTDGHRFVNGVLDKLAARLRSIEVEAARAKKDAGDGQA.

This sequence belongs to the NusB family.

Its function is as follows. Involved in transcription antitermination. Required for transcription of ribosomal RNA (rRNA) genes. Binds specifically to the boxA antiterminator sequence of the ribosomal RNA (rrn) operons. This chain is Transcription antitermination protein NusB, found in Azoarcus sp. (strain BH72).